Here is a 442-residue protein sequence, read N- to C-terminus: MLNVTDLRGQTPSKSDIRRALPRGGTDVWSVLPIVQPVVEDVQNRGAEAALDYGEKFDHIRPASVRVPAEVIAAAENTLDPLVRESIEESIRRVRKVHAEQKPSEHTTELSPGGTVTERFMPIDRVGLYVPGGNAVYPSSVIMNTVPAQEAGVNSLVVASPPQAEHGGWPHPTILAACSILGVDEVWAVGGGQAVALLAYGDDAAGLEPVDMITGPGNIFVTAAKRLVRGVVGTDSEAGPTEIAVLADASANAVNVAYDLISQAEHDVMAASVLITDSEQLAKDVNREIEARYSITRNAERVAEALRGAQSGIVLVDDISVGIQVADQYAAEHLEIHTENARAVAEQITNAGAIFVGDFSPVPLGDYSAGSNHVLPTSGSARFSAGLSTHTFLRPVNLIEYDEAALKDVSQVVINFANAEDLPAHGEAIRARFENLPTTDEA.

The tract at residues 1–20 (MLNVTDLRGQTPSKSDIRRA) is disordered. The NAD(+) site is built by Tyr-129, Gln-193, and Asn-218. The substrate site is built by Thr-241, Gln-263, and His-266. Residues Gln-263 and His-266 each coordinate Zn(2+). Active-site proton acceptor residues include Glu-332 and His-333. His-333, Asp-366, Glu-420, and His-425 together coordinate substrate. Asp-366 lines the Zn(2+) pocket. His-425 contributes to the Zn(2+) binding site.

The protein belongs to the histidinol dehydrogenase family. Zn(2+) is required as a cofactor.

It catalyses the reaction L-histidinol + 2 NAD(+) + H2O = L-histidine + 2 NADH + 3 H(+). It functions in the pathway amino-acid biosynthesis; L-histidine biosynthesis; L-histidine from 5-phospho-alpha-D-ribose 1-diphosphate: step 9/9. In terms of biological role, catalyzes the sequential NAD-dependent oxidations of L-histidinol to L-histidinaldehyde and then to L-histidine. In Corynebacterium glutamicum (strain ATCC 13032 / DSM 20300 / JCM 1318 / BCRC 11384 / CCUG 27702 / LMG 3730 / NBRC 12168 / NCIMB 10025 / NRRL B-2784 / 534), this protein is Histidinol dehydrogenase.